The primary structure comprises 308 residues: Urease accessory protein UreD (308 aa).

This sequence belongs to the UreD family. UreD, UreF and UreG form a complex that acts as a GTP-hydrolysis-dependent molecular chaperone, activating the urease apoprotein by helping to assemble the nickel containing metallocenter of UreC. The UreE protein probably delivers the nickel.

It is found in the cytoplasm. Required for maturation of urease via the functional incorporation of the urease nickel metallocenter. The polypeptide is Urease accessory protein UreD (Psychromonas ingrahamii (strain DSM 17664 / CCUG 51855 / 37)).